The primary structure comprises 434 residues: 23S rRNA (uracil(1939)-C(5))-methyltransferase RlmD (434 aa).

The 59-residue stretch at 10 to 68 (RVTTRQIITVTVNDLDPFGQGVARHQGKALFVSGVLPHEQAEVVLVEDKKQYARAEVKR) folds into the TRAM domain. [4Fe-4S] cluster is bound by residues C81, C87, C90, and C162. S-adenosyl-L-methionine contacts are provided by Q265, F294, N299, E315, N342, and D363. The Nucleophile role is filled by C389.

It belongs to the class I-like SAM-binding methyltransferase superfamily. RNA M5U methyltransferase family. RlmD subfamily.

It carries out the reaction uridine(1939) in 23S rRNA + S-adenosyl-L-methionine = 5-methyluridine(1939) in 23S rRNA + S-adenosyl-L-homocysteine + H(+). Its function is as follows. Catalyzes the formation of 5-methyl-uridine at position 1939 (m5U1939) in 23S rRNA. The sequence is that of 23S rRNA (uracil(1939)-C(5))-methyltransferase RlmD from Klebsiella pneumoniae subsp. pneumoniae (strain ATCC 700721 / MGH 78578).